Here is a 408-residue protein sequence, read N- to C-terminus: tRNA(Ile)-lysidine synthase (408 aa).

Residue 27–32 (SGGGDS) participates in ATP binding.

It belongs to the tRNA(Ile)-lysidine synthase family.

It is found in the cytoplasm. It carries out the reaction cytidine(34) in tRNA(Ile2) + L-lysine + ATP = lysidine(34) in tRNA(Ile2) + AMP + diphosphate + H(+). Its function is as follows. Ligates lysine onto the cytidine present at position 34 of the AUA codon-specific tRNA(Ile) that contains the anticodon CAU, in an ATP-dependent manner. Cytidine is converted to lysidine, thus changing the amino acid specificity of the tRNA from methionine to isoleucine. This Caulobacter vibrioides (strain ATCC 19089 / CIP 103742 / CB 15) (Caulobacter crescentus) protein is tRNA(Ile)-lysidine synthase.